A 65-amino-acid chain; its full sequence is Putative beta-neurotoxin RjAa7 (65 aa).

In terms of domain architecture, LCN-type CS-alpha/beta spans 1–64 (KEGYPVGRDG…VWDSSTNKCG (64 aa)). 4 cysteine pairs are disulfide-bonded: C11–C63, C15–C37, C22–C44, and C26–C46.

Belongs to the long (4 C-C) scorpion toxin superfamily. Sodium channel inhibitor family. Beta subfamily. Expressed by the venom gland.

It localises to the secreted. In terms of biological role, beta toxins bind voltage-independently at site-4 of sodium channels (Nav) and shift the voltage of activation toward more negative potentials thereby affecting sodium channel activation and promoting spontaneous and repetitive firing. This Rhopalurus junceus (Caribbean blue scorpion) protein is Putative beta-neurotoxin RjAa7.